A 318-amino-acid chain; its full sequence is NADH-quinone oxidoreductase subunit H 2 (318 aa).

9 helical membrane passes run 4-24 (LLIALFSLILLLALLGAAGVF), 77-97 (LAPALAAFPMLAGFGVVAFAP), 106-126 (VGVLFVMGMLALTVWALVLGA), 146-166 (LAYESFLGLSLMGCVLLAGSF), 179-199 (LWFILLQPLGAALFFLAGLAA), 214-234 (LVAGFMTEYSGMSFALFFLGE), 238-258 (ILLVAALFTTLFLGGWAGPIL), 262-282 (IWFGLKVAAISVVFVWLRAAL), and 293-313 (FAWKVALPLALLNLLVTAWIA).

Belongs to the complex I subunit 1 family. In terms of assembly, NDH-1 is composed of 14 different subunits. Subunits NuoA, H, J, K, L, M, N constitute the membrane sector of the complex.

It is found in the cell inner membrane. It catalyses the reaction a quinone + NADH + 5 H(+)(in) = a quinol + NAD(+) + 4 H(+)(out). Functionally, NDH-1 shuttles electrons from NADH, via FMN and iron-sulfur (Fe-S) centers, to quinones in the respiratory chain. The immediate electron acceptor for the enzyme in this species is believed to be ubiquinone. Couples the redox reaction to proton translocation (for every two electrons transferred, four hydrogen ions are translocated across the cytoplasmic membrane), and thus conserves the redox energy in a proton gradient. This subunit may bind ubiquinone. This is NADH-quinone oxidoreductase subunit H 2 from Cereibacter sphaeroides (strain ATCC 17023 / DSM 158 / JCM 6121 / CCUG 31486 / LMG 2827 / NBRC 12203 / NCIMB 8253 / ATH 2.4.1.) (Rhodobacter sphaeroides).